Here is a 264-residue protein sequence, read N- to C-terminus: Apolipoprotein A-I (264 aa).

An N-terminal signal peptide occupies residues 1-18 (MKAVVLAVALVFLTGSQA). 2 consecutive repeat copies span residues 67 to 88 (LNLL…ERLG) and 89 to 110 (PLTR…QEMN). The tract at residues 67-264 (LNLLENWDTL…DKARETLTAQ (198 aa)) is 10 X approximate tandem repeats. Met109 is modified (methionine sulfoxide). The stretch at 111–121 (KDLEEVKQNVQ) is one 3; half-length repeat. 3 tandem repeats follow at residues 122-143 (PYLD…QRVA), 144-165 (PLGA…GKLS), and 166-187 (PVAE…TQLA). Residues 188-207 (PHSDKLRESLAQRLAELKSN) form a 7; truncated repeat. Copy 8 of the repeat occupies 208 to 229 (PTLNEYHTRAKTHLNTFGEKAR). A 9; half-length repeat occupies 230 to 240 (PALEDLRHTLI). Copy 10 of the repeat occupies 241-264 (PILDTLKTKVKSVIDKARETLTAQ).

This sequence belongs to the apolipoprotein A1/A4/E family. In terms of assembly, homodimer. Interacts with APOA1BP and CLU. Component of a sperm activating protein complex (SPAP), consisting of APOA1, an immunoglobulin heavy chain, an immunoglobulin light chain and albumin. Interacts with NDRG1. Interacts with SCGB3A2. Interacts with NAXE and YJEFN3. Glycosylated. In terms of processing, palmitoylated. Post-translationally, phosphorylation sites are present in the extracellular medium.

Its subcellular location is the secreted. In terms of biological role, participates in the reverse transport of cholesterol from tissues to the liver for excretion by promoting cholesterol efflux from tissues and by acting as a cofactor for the lecithin cholesterol acyltransferase (LCAT). As part of the SPAP complex, activates spermatozoa motility. The polypeptide is Apolipoprotein A-I (Apoa1) (Mus pahari (Gairdner's shrew-mouse)).